The following is a 101-amino-acid chain: Replication restart protein PriB (101 aa).

Residues 1-101 enclose the SSB domain; sequence MTTNNLVLAG…LHAENVELKT (101 aa).

The protein belongs to the PriB family. In terms of assembly, homodimer. Interacts with PriA and DnaT. Component of the replication restart primosome. Primosome assembly occurs via a 'hand-off' mechanism. PriA binds to replication forks, subsequently PriB then DnaT bind; DnaT then displaces ssDNA to generate the helicase loading substrate.

Involved in the restart of stalled replication forks, which reloads the replicative helicase on sites other than the origin of replication; the PriA-PriB pathway is the major replication restart pathway. During primosome assembly it facilitates complex formation between PriA and DnaT on DNA; stabilizes PriA on DNA. Stimulates the DNA unwinding activity of PriA helicase. The protein is Replication restart protein PriB of Shewanella pealeana (strain ATCC 700345 / ANG-SQ1).